Here is a 59-residue protein sequence, read N- to C-terminus: Potassium channel toxin alpha-KTx 1.12 (59 aa).

The first 22 residues, 1–22, serve as a signal peptide directing secretion; it reads MKILSVLLLALIICSIVGWSEA. Pyrrolidone carboxylic acid is present on Q23. 3 disulfide bridges follow: C29/C50, C35/C55, and C39/C57. The interaction with Ca(2+)-activated K(+) channels stretch occupies residues 48–55; sequence GKCMNKKC.

This sequence belongs to the short scorpion toxin superfamily. Potassium channel inhibitor family. Alpha-KTx 01 subfamily. In terms of tissue distribution, expressed by the venom gland.

The protein localises to the secreted. In terms of biological role, potent selective inhibitor of high conductance (maxi-K), different medium and small conductance calcium-activated potassium channels (KCa1.1/KCNMA1 and others), as well as a voltage-dependent potassium channel (Kv1.3/KCNA3&gt;Kv1.2/KCNA2&gt;Kv1.6/KCNA3&gt;&gt;Shaker/Sh). It blocks channel activity by a simple bimolecular inhibition process. Its function is as follows. Has a pH-specific antimicrobial activity against bacteria (B.subtilis, E.coli and S.aureus) and the fungus C.albicans. This chain is Potassium channel toxin alpha-KTx 1.12, found in Leiurus hebraeus (Hebrew deathstalker scorpion).